The primary structure comprises 615 residues: Medium-chain acyl-CoA ligase ACSF2, mitochondrial (615 aa).

Residues 1 to 42 (MAVYVGMLRVARLCARSPRVLGARVGLSRVWQEARLWGVRPL) constitute a mitochondrion transit peptide. Lys-179 is modified (N6-acetyllysine). Residue Lys-182 is modified to N6-acetyllysine; alternate. Residue Lys-182 is modified to N6-succinyllysine; alternate. The residue at position 199 (Lys-199) is an N6-acetyllysine. 263–271 (TSGTTGSPK) contributes to the ATP binding site. Residues Lys-340 and Lys-398 each carry the N6-acetyllysine modification. Residue Lys-478 is modified to N6-succinyllysine. ATP is bound by residues Asp-493 and Arg-508. Lys-510 bears the N6-acetyllysine mark. Residues Lys-544 and Lys-570 each carry the N6-acetyllysine; alternate modification. 2 positions are modified to N6-succinyllysine; alternate: Lys-544 and Lys-570. Position 599 (Lys-599) interacts with ATP. N6-succinyllysine is present on Lys-599.

This sequence belongs to the ATP-dependent AMP-binding enzyme family.

The protein localises to the mitochondrion. It catalyses the reaction a medium-chain fatty acid + ATP + CoA = a medium-chain fatty acyl-CoA + AMP + diphosphate. The enzyme catalyses octanoate + ATP + CoA = octanoyl-CoA + AMP + diphosphate. In terms of biological role, acyl-CoA synthases catalyze the initial reaction in fatty acid metabolism, by forming a thioester with CoA. Has some preference toward medium-chain substrates. Plays a role in adipocyte differentiation. The protein is Medium-chain acyl-CoA ligase ACSF2, mitochondrial of Bos taurus (Bovine).